A 527-amino-acid polypeptide reads, in one-letter code: Glutamate--cysteine ligase (527 aa).

The protein belongs to the glutamate--cysteine ligase type 1 family. Type 1 subfamily.

It catalyses the reaction L-cysteine + L-glutamate + ATP = gamma-L-glutamyl-L-cysteine + ADP + phosphate + H(+). Its pathway is sulfur metabolism; glutathione biosynthesis; glutathione from L-cysteine and L-glutamate: step 1/2. The sequence is that of Glutamate--cysteine ligase from Pseudomonas aeruginosa (strain ATCC 15692 / DSM 22644 / CIP 104116 / JCM 14847 / LMG 12228 / 1C / PRS 101 / PAO1).